Reading from the N-terminus, the 104-residue chain is NADH-quinone oxidoreductase subunit K (104 aa).

3 helical membrane-spanning segments follow: residues 4 to 24 (VPLS…LYGA), 31 to 51 (VIVL…LVAF), and 64 to 84 (IFAL…LAIL).

This sequence belongs to the complex I subunit 4L family. As to quaternary structure, NDH-1 is composed of 14 different subunits. Subunits NuoA, H, J, K, L, M, N constitute the membrane sector of the complex.

It is found in the cell membrane. The catalysed reaction is a quinone + NADH + 5 H(+)(in) = a quinol + NAD(+) + 4 H(+)(out). NDH-1 shuttles electrons from NADH, via FMN and iron-sulfur (Fe-S) centers, to quinones in the respiratory chain. The immediate electron acceptor for the enzyme in this species is believed to be a menaquinone. Couples the redox reaction to proton translocation (for every two electrons transferred, four hydrogen ions are translocated across the cytoplasmic membrane), and thus conserves the redox energy in a proton gradient. The chain is NADH-quinone oxidoreductase subunit K from Geobacillus sp. (strain WCH70).